We begin with the raw amino-acid sequence, 570 residues long: Ribosome-inactivating protein SNAI (570 aa).

The N-terminal stretch at 1 to 28 (MRLVAKLLYLAVLAICGLGIHGALTHPR) is a signal peptide. N-linked (GlcNAc...) asparagine glycans are attached at residues N40, N62, and N144. E199 is an active-site residue. The N-linked (GlcNAc...) asparagine glycan is linked to N260. Intrachain disulfides connect C284–C316, C332–C351, and C373–C385. 2 Ricin B-type lectin domains span residues 319–439 (VEVT…WTVG) and 441–566 (VEPL…WITT). The 1-alpha repeat unit spans residues 329-369 (DGLCVDVRYGHYIDGNPVQLRPCGNECNQLWTFRTDGTIRW). Residues 370 to 405 (LGKCLTASSSVMIYDCNTVPPEATKWVVSIDGTITN) form a 1-beta repeat. The 1-gamma repeat unit spans residues 408–440 (SGLVLTAPQAAEGTALSLENNIHAARQGWTVGD). A 2-alpha repeat occupies 452–489 (KQMCLRENGENNFVWLEDCVLNRVQQEWALYGDGTIRV). An intrachain disulfide couples C455 to C470. The N-linked (GlcNAc...) asparagine glycan is linked to N492. The stretch at 493 to 531 (RSLCVTSEDHEPSDLIVILKCEGSGNQRWVFNTNGTISN) is one 2-beta repeat. The cysteines at positions 496 and 513 are disulfide-linked. Residue N526 is glycosylated (N-linked (GlcNAc...) asparagine). A 2-gamma repeat occupies 534–567 (AKLLMDVAQRDVSLRKIILYRPTGNPNQQWITTT).

The protein belongs to the ribosome-inactivating protein family. Type 2 RIP subfamily. In terms of assembly, tetramer of four pairs of disulfide bound A-B chains. The precursor is processed in two chains, A and B, that are linked by a disulfide bond. A small truncated form corresponding roughly to the second ricin B-type lectin domain of the B chain, TrSNAI, can also be produced. Post-translationally, glycosylated. N-glycans of subunit A are (Man)2-3(Xyl)(GlcNAc)2(Fuc) at Asn-40, (GlcNAc)0-2(Man)3(Xyl)(GlcNAc)2(Fuc) or (Man)1-2(GlcNAc)2 at Asn-62, (Man)3(Xyl)(GlcNAc)2(Fuc)0-1 at Asn-144 and (GlcNAc)0-1(Man)3(Xyl)(GlcNAc)2(Fuc) at Asn-260. N-glycans of subunit B are (Man)3(Xyl)(GlcNAc)2(Fuc) at Asn-492 and (Man)6-9(GlcNAc)2 at Asn-526. Expressed in bark.

The catalysed reaction is Endohydrolysis of the N-glycosidic bond at one specific adenosine on the 28S rRNA.. Functionally, neu5Ac(alpha2-6)Gal/GalNAc specific agglutinin. Behaves as a type-2 ribosome-inactivating protein. Strongly inhibits mammalian but not plant ribosomes. The A chain is responsible for inhibiting protein synthesis through the catalytic inactivation of 60S ribosomal subunits by removing adenine from position 4,324 of 28S rRNA. The B chain binds to cell receptors and probably facilitates the entry into the cell of the A chain; B chains are also responsible for cell agglutination (lectin activity). Involved in plant defense against insects. Binds Neu5Ac(alpha2-6)Gal/GalNAc but has no clear agglutination activity. This chain is Ribosome-inactivating protein SNAI, found in Sambucus nigra (European elder).